The sequence spans 330 residues: Ketol-acid reductoisomerase (NADP(+)) (330 aa).

Residues 2–182 (VEIYYDDDAS…GGTRAGALRT (181 aa)) enclose the KARI N-terminal Rossmann domain. NADP(+)-binding positions include 25-28 (YGSQ), S51, and S53. H108 is an active-site residue. G134 is an NADP(+) binding site. Positions 183-328 (TFTEETETDL…AKLRPLMSWI (146 aa)) constitute a KARI C-terminal knotted domain. The Mg(2+) site is built by D191, E195, E227, and E231. S252 lines the substrate pocket.

It belongs to the ketol-acid reductoisomerase family. It depends on Mg(2+) as a cofactor.

It carries out the reaction (2R)-2,3-dihydroxy-3-methylbutanoate + NADP(+) = (2S)-2-acetolactate + NADPH + H(+). The enzyme catalyses (2R,3R)-2,3-dihydroxy-3-methylpentanoate + NADP(+) = (S)-2-ethyl-2-hydroxy-3-oxobutanoate + NADPH + H(+). It functions in the pathway amino-acid biosynthesis; L-isoleucine biosynthesis; L-isoleucine from 2-oxobutanoate: step 2/4. It participates in amino-acid biosynthesis; L-valine biosynthesis; L-valine from pyruvate: step 2/4. Functionally, involved in the biosynthesis of branched-chain amino acids (BCAA). Catalyzes an alkyl-migration followed by a ketol-acid reduction of (S)-2-acetolactate (S2AL) to yield (R)-2,3-dihydroxy-isovalerate. In the isomerase reaction, S2AL is rearranged via a Mg-dependent methyl migration to produce 3-hydroxy-3-methyl-2-ketobutyrate (HMKB). In the reductase reaction, this 2-ketoacid undergoes a metal-dependent reduction by NADPH to yield (R)-2,3-dihydroxy-isovalerate. This Frankia alni (strain DSM 45986 / CECT 9034 / ACN14a) protein is Ketol-acid reductoisomerase (NADP(+)).